Reading from the N-terminus, the 291-residue chain is tRNA dimethylallyltransferase (291 aa).

ATP is bound at residue 9 to 16 (GPTASGKT). Residue 11 to 16 (TASGKT) coordinates substrate. Residues 34-37 (DSLQ) form an interaction with substrate tRNA region.

The protein belongs to the IPP transferase family. In terms of assembly, monomer. Requires Mg(2+) as cofactor.

It carries out the reaction adenosine(37) in tRNA + dimethylallyl diphosphate = N(6)-dimethylallyladenosine(37) in tRNA + diphosphate. In terms of biological role, catalyzes the transfer of a dimethylallyl group onto the adenine at position 37 in tRNAs that read codons beginning with uridine, leading to the formation of N6-(dimethylallyl)adenosine (i(6)A). The protein is tRNA dimethylallyltransferase of Onion yellows phytoplasma (strain OY-M).